We begin with the raw amino-acid sequence, 317 residues long: Tenomodulin (317 aa).

Residues 1–30 are Cytoplasmic-facing; it reads MAKNPPENCEGCHILNAEALKSKKICKSLK. A helical; Signal-anchor for type II membrane protein membrane pass occupies residues 31 to 50; sequence ICGLVFGILALTLIVLFWGS. Residues 51-317 are Extracellular-facing; that stretch reads KHFWPEVSKK…WWVARMLGRV (267 aa). In terms of domain architecture, BRICHOS spans 93-186; that stretch reads GNGTDETLEV…ICDNVTMYWI (94 aa). Asparagine 94 carries an N-linked (GlcNAc...) asparagine glycan. A disulfide bridge connects residues cysteine 120 and cysteine 178. Asparagine 180 carries N-linked (GlcNAc...) asparagine glycosylation. A Phosphoserine modification is found at serine 239.

It belongs to the chondromodulin-1 family. As to expression, widely expressed with highest expression in tendons and ligaments, in the diaphragm, eye and skeletal muscle. Expressed in neuronal cells of all brain regions. Very low expression, if any, in glial cells.

The protein resides in the membrane. Its subcellular location is the nucleus envelope. Functionally, may be an angiogenesis inhibitor. The protein is Tenomodulin (Tnmd) of Mus musculus (Mouse).